Here is a 360-residue protein sequence, read N- to C-terminus: Photosystem II protein D1 (360 aa).

3 helical membrane-spanning segments follow: residues Tyr30–Ala47, His119–Leu134, and Trp143–Ala157. His119 lines the chlorophyll a pocket. Tyr127 is a binding site for pheophytin a. The [CaMn4O5] cluster site is built by Asp171 and Glu190. Residues Phe198–Leu219 form a helical membrane-spanning segment. His199 contacts chlorophyll a. Residues His216 and Ser265–Phe266 each bind a quinone. His216 contacts Fe cation. His273 is a Fe cation binding site. The helical transmembrane segment at Phe275–Met289 threads the bilayer. [CaMn4O5] cluster-binding residues include His333, Glu334, Asp343, and Ala345. The propeptide occupies Ala346–Gly360.

The protein belongs to the reaction center PufL/M/PsbA/D family. PSII is composed of 1 copy each of membrane proteins PsbA, PsbB, PsbC, PsbD, PsbE, PsbF, PsbH, PsbI, PsbJ, PsbK, PsbL, PsbM, PsbT, PsbX, PsbY, Psb30/Ycf12, peripheral proteins PsbO, CyanoQ (PsbQ), PsbU, PsbV and a large number of cofactors. It forms dimeric complexes. It depends on The D1/D2 heterodimer binds P680, chlorophylls that are the primary electron donor of PSII, and subsequent electron acceptors. It shares a non-heme iron and each subunit binds pheophytin, quinone, additional chlorophylls, carotenoids and lipids. D1 provides most of the ligands for the Mn4-Ca-O5 cluster of the oxygen-evolving complex (OEC). There is also a Cl(-1) ion associated with D1 and D2, which is required for oxygen evolution. The PSII complex binds additional chlorophylls, carotenoids and specific lipids. as a cofactor. Tyr-162 forms a radical intermediate that is referred to as redox-active TyrZ, YZ or Y-Z. In terms of processing, C-terminally processed by CtpA; processing is essential to allow assembly of the oxygen-evolving complex and thus photosynthetic growth.

Its subcellular location is the cellular thylakoid membrane. It catalyses the reaction 2 a plastoquinone + 4 hnu + 2 H2O = 2 a plastoquinol + O2. Photosystem II (PSII) is a light-driven water:plastoquinone oxidoreductase that uses light energy to abstract electrons from H(2)O, generating O(2) and a proton gradient subsequently used for ATP formation. It consists of a core antenna complex that captures photons, and an electron transfer chain that converts photonic excitation into a charge separation. The D1/D2 (PsbA/PsbD) reaction center heterodimer binds P680, the primary electron donor of PSII as well as several subsequent electron acceptors. This is Photosystem II protein D1 from Prochlorococcus marinus (strain MIT 9515).